A 149-amino-acid chain; its full sequence is 3-dehydroquinate dehydratase (149 aa).

The active-site Proton acceptor is Tyr-24. Residues Asn-75, His-81, and Asp-88 each contribute to the substrate site. Catalysis depends on His-101, which acts as the Proton donor. Substrate contacts are provided by residues 102–103 (IS) and Arg-112.

The protein belongs to the type-II 3-dehydroquinase family. Homododecamer.

It catalyses the reaction 3-dehydroquinate = 3-dehydroshikimate + H2O. The protein operates within metabolic intermediate biosynthesis; chorismate biosynthesis; chorismate from D-erythrose 4-phosphate and phosphoenolpyruvate: step 3/7. Its function is as follows. Catalyzes a trans-dehydration via an enolate intermediate. The sequence is that of 3-dehydroquinate dehydratase from Methylobacterium radiotolerans (strain ATCC 27329 / DSM 1819 / JCM 2831 / NBRC 15690 / NCIMB 10815 / 0-1).